A 261-amino-acid chain; its full sequence is Phosphonates import ATP-binding protein PhnC (261 aa).

Residues Leu-15–Arg-257 form the ABC transporter domain. Gly-48–Ser-55 contributes to the ATP binding site.

It belongs to the ABC transporter superfamily. Phosphonates importer (TC 3.A.1.9.1) family. As to quaternary structure, the complex is composed of two ATP-binding proteins (PhnC), two transmembrane proteins (PhnE) and a solute-binding protein (PhnD).

It localises to the cell inner membrane. It catalyses the reaction phosphonate(out) + ATP + H2O = phosphonate(in) + ADP + phosphate + H(+). Part of the ABC transporter complex PhnCDE involved in phosphonates import. Responsible for energy coupling to the transport system. The chain is Phosphonates import ATP-binding protein PhnC from Hyphomonas neptunium (strain ATCC 15444).